Reading from the N-terminus, the 283-residue chain is NAD(P)H-hydrate epimerase (283 aa).

The transit peptide at methionine 1–cysteine 28 directs the protein to the mitochondrion. The YjeF N-terminal domain occupies alanine 61–leucine 270. Asparagine 115 to aspartate 119 lines the (6S)-NADPHX pocket. The K(+) site is built by asparagine 116 and aspartate 180. (6S)-NADPHX contacts are provided by residues glycine 184–alanine 190 and aspartate 213. Serine 216 contacts K(+).

It belongs to the NnrE/AIBP family. As to quaternary structure, homodimer. Interacts with apoa1a. Binds to high-density lipoprotein. The cofactor is K(+).

It is found in the mitochondrion. Its subcellular location is the secreted. It catalyses the reaction (6R)-NADHX = (6S)-NADHX. The enzyme catalyses (6R)-NADPHX = (6S)-NADPHX. Catalyzes the epimerization of the S- and R-forms of NAD(P)HX, a damaged form of NAD(P)H that is a result of enzymatic or heat-dependent hydration. This is a prerequisite for the S-specific NAD(P)H-hydrate dehydratase to allow the repair of both epimers of NAD(P)HX. This is NAD(P)H-hydrate epimerase from Danio rerio (Zebrafish).